We begin with the raw amino-acid sequence, 124 residues long: Small ribosomal subunit protein uS12 (124 aa).

3-methylthioaspartic acid is present on Asp-89. At Lys-108 the chain carries N6-acetyllysine.

The protein belongs to the universal ribosomal protein uS12 family. Part of the 30S ribosomal subunit. Contacts proteins S8 and S17. May interact with IF1 in the 30S initiation complex.

Functionally, with S4 and S5 plays an important role in translational accuracy. In terms of biological role, interacts with and stabilizes bases of the 16S rRNA that are involved in tRNA selection in the A site and with the mRNA backbone. Located at the interface of the 30S and 50S subunits, it traverses the body of the 30S subunit contacting proteins on the other side and probably holding the rRNA structure together. The combined cluster of proteins S8, S12 and S17 appears to hold together the shoulder and platform of the 30S subunit. This is Small ribosomal subunit protein uS12 from Escherichia coli (strain K12 / MC4100 / BW2952).